Consider the following 421-residue polypeptide: Synaptotagmin-1 (421 aa).

Positions methionine 1–aspartate 40 are disordered. At methionine 1 to proline 60 the chain is on the vesicular side. The span at leucine 10–proline 23 shows a compositional bias: low complexity. An N-linked (GlcNAc...) asparagine glycan is attached at asparagine 25. Residues tryptophan 61 to leucine 81 form a helical membrane-spanning segment. 5 S-palmitoyl cysteine lipidation sites follow: cysteine 77, cysteine 78, cysteine 80, cysteine 82, and cysteine 85. Residues cysteine 82–lysine 421 are Cytoplasmic-facing. Residues lysine 94–valine 139 form a disordered region. The span at lysine 107 to aspartate 118 shows a compositional bias: basic and acidic residues. A compositionally biased stretch (acidic residues) spans glutamine 119 to lysine 133. Residues glutamate 135–asparagine 381 form a phospholipid binding region. 2 C2 domains span residues lysine 141 to arginine 260 and lysine 272 to histidine 405. Leucine 171, aspartate 172, aspartate 178, aspartate 230, phenylalanine 231, aspartate 232, serine 235, lysine 236, aspartate 238, aspartate 303, aspartate 309, aspartate 363, aspartate 365, and aspartate 371 together coordinate Ca(2+).

This sequence belongs to the synaptotagmin family. In terms of assembly, homotetramer. Ca(2+) serves as cofactor.

Its subcellular location is the cytoplasmic vesicle. It localises to the secretory vesicle membrane. The protein localises to the secretory vesicle. It is found in the synaptic vesicle membrane. The protein resides in the chromaffin granule membrane. Its subcellular location is the cytoplasm. Calcium sensor that participates in triggering neurotransmitter release at the synapse. May have a regulatory role in the membrane interactions during trafficking of synaptic vesicles at the active zone of the synapse. It binds acidic phospholipids with a specificity that requires the presence of both an acidic head group and a diacyl backbone. May play a role in dendrite formation by melanocytes. May play a role in regulating the secretion of hormones relevant to the reproduction and egg-laying of female geese. In Anser cygnoides (Swan goose), this protein is Synaptotagmin-1.